Reading from the N-terminus, the 120-residue chain is ATP-dependent Clp protease adapter protein ClpS (120 aa).

Belongs to the ClpS family. Binds to the N-terminal domain of the chaperone ClpA.

Its function is as follows. Involved in the modulation of the specificity of the ClpAP-mediated ATP-dependent protein degradation. This chain is ATP-dependent Clp protease adapter protein ClpS, found in Pseudomonas syringae pv. syringae (strain B728a).